The following is a 205-amino-acid chain: Thymidylate kinase (205 aa).

ATP is bound at residue 10-17 (GLEGAGKS).

This sequence belongs to the thymidylate kinase family.

It carries out the reaction dTMP + ATP = dTDP + ADP. Phosphorylation of dTMP to form dTDP in both de novo and salvage pathways of dTTP synthesis. The polypeptide is Thymidylate kinase (Idiomarina loihiensis (strain ATCC BAA-735 / DSM 15497 / L2-TR)).